Here is a 62-residue protein sequence, read N- to C-terminus: Photosystem II reaction center protein Z (62 aa).

A run of 2 helical transmembrane segments spans residues 8–28 (AVFA…VVFS) and 41–61 (FSGT…NSLI).

This sequence belongs to the PsbZ family. In terms of assembly, PSII is composed of 1 copy each of membrane proteins PsbA, PsbB, PsbC, PsbD, PsbE, PsbF, PsbH, PsbI, PsbJ, PsbK, PsbL, PsbM, PsbT, PsbY, PsbZ, Psb30/Ycf12, at least 3 peripheral proteins of the oxygen-evolving complex and a large number of cofactors. It forms dimeric complexes.

It localises to the plastid. It is found in the chloroplast thylakoid membrane. Its function is as follows. May control the interaction of photosystem II (PSII) cores with the light-harvesting antenna, regulates electron flow through the 2 photosystem reaction centers. PSII is a light-driven water plastoquinone oxidoreductase, using light energy to abstract electrons from H(2)O, generating a proton gradient subsequently used for ATP formation. The protein is Photosystem II reaction center protein Z of Populus alba (White poplar).